Here is a 213-residue protein sequence, read N- to C-terminus: Large ribosomal subunit protein uL1 (213 aa).

This sequence belongs to the universal ribosomal protein uL1 family.

The protein is Large ribosomal subunit protein uL1 (RPL10A) of Chlamydomonas reinhardtii (Chlamydomonas smithii).